A 151-amino-acid polypeptide reads, in one-letter code: Large ribosomal subunit protein bL28c (151 aa).

A chloroplast-targeting transit peptide spans 1–74 (MATMVAGISL…PFKPSLQPVA (74 aa)).

This sequence belongs to the bacterial ribosomal protein bL28 family. In terms of assembly, part of the 50S ribosomal subunit.

The protein localises to the plastid. It localises to the chloroplast. The chain is Large ribosomal subunit protein bL28c (RPL28) from Nicotiana tabacum (Common tobacco).